A 164-amino-acid polypeptide reads, in one-letter code: ATP synthase subunit b (164 aa).

The chain crosses the membrane as a helical span at residues Ala-10–Leu-32.

It belongs to the ATPase B chain family. As to quaternary structure, F-type ATPases have 2 components, F(1) - the catalytic core - and F(0) - the membrane proton channel. F(1) has five subunits: alpha(3), beta(3), gamma(1), delta(1), epsilon(1). F(0) has three main subunits: a(1), b(2) and c(10-14). The alpha and beta chains form an alternating ring which encloses part of the gamma chain. F(1) is attached to F(0) by a central stalk formed by the gamma and epsilon chains, while a peripheral stalk is formed by the delta and b chains.

It is found in the cell inner membrane. In terms of biological role, f(1)F(0) ATP synthase produces ATP from ADP in the presence of a proton or sodium gradient. F-type ATPases consist of two structural domains, F(1) containing the extramembraneous catalytic core and F(0) containing the membrane proton channel, linked together by a central stalk and a peripheral stalk. During catalysis, ATP synthesis in the catalytic domain of F(1) is coupled via a rotary mechanism of the central stalk subunits to proton translocation. Its function is as follows. Component of the F(0) channel, it forms part of the peripheral stalk, linking F(1) to F(0). This is ATP synthase subunit b from Gluconacetobacter diazotrophicus (strain ATCC 49037 / DSM 5601 / CCUG 37298 / CIP 103539 / LMG 7603 / PAl5).